The sequence spans 906 residues: Cadherin-2 (906 aa).

The N-terminal stretch at 1 to 25 (MCRIAGGPRTLLPLLAALLQASLEA) is a signal peptide. The propeptide occupies 26–159 (SGELALCKTG…HSGALQRQKR (134 aa)). Residue S96 is modified to Phosphoserine. 5 Cadherin domains span residues 160–267 (DWVI…RPEF), 268–382 (LHQV…PPEF), 383–497 (TAMT…NPYF), 498–603 (APNP…DNAP), and 604–717 (QVLP…RIVG). Over 160–724 (DWVIPPINLP…IVGAGLGTGT (565 aa)) the chain is Extracellular. Residue E170 coordinates Ca(2+). N190 carries an N-linked (GlcNAc...) asparagine glycan. Ca(2+) is bound by residues D226, E228, D259, M260, N261, D262, and N263. The N-linked (GlcNAc...) asparagine glycan is linked to N273. Ca(2+) contacts are provided by D293, D295, and N301. N325 carries an N-linked (GlcNAc...) asparagine glycan. D353 serves as a coordination point for Ca(2+). N-linked (GlcNAc...) asparagine glycans are attached at residues N402, N572, N622, N651, and N692. A helical membrane pass occupies residues 725–745 (IIAILLCIIILLILVLMFVVW). Residues 746 to 906 (MKRRDKERQA…LADMYGGGDD (161 aa)) are Cytoplasmic-facing. Residues 863–880 (SGSTAGSLSSLNSSSSGG) show a composition bias toward low complexity. Positions 863 to 883 (SGSTAGSLSSLNSSSSGGDQD) are disordered.

In terms of assembly, homodimer (via extracellular region). Can also form heterodimers with other cadherins (via extracellular region). Dimerization occurs in trans, i.e. with a cadherin chain from another cell. Interacts with PCDH8; this complex may also include TAOK2. The interaction with PCDH8 may lead to internalization through TAOK2/p38 MAPK pathway. Identified in a complex containing FGFR4, NCAM1, CDH2, PLCG1, FRS2, SRC, SHC1, GAP43 and CTTN. May interact with OBSCN (via protein kinase domain 2). Interacts with FBXO45. In terms of processing, cleaved by MMP24. Ectodomain cleavage leads to the generation of a soluble 90 kDa N-terminal soluble fragment and a 45 kDa membrane-bound C-terminal fragment 1 (CTF1), which is further cleaved by gamma-secretase into a 35 kDa. Cleavage in neural stem cells by MMP24 affects CDH2-mediated anchorage of neural stem cells to ependymocytes in the adult subependymal zone, leading to modulate neural stem cell quiescence. Post-translationally, may be phosphorylated by OBSCN. In testis, expressed in Sertoli and germ cells.

The protein resides in the cell membrane. It is found in the sarcolemma. Its subcellular location is the cell junction. The protein localises to the cell surface. It localises to the desmosome. The protein resides in the adherens junction. Calcium-dependent cell adhesion protein; preferentially mediates homotypic cell-cell adhesion by dimerization with a CDH2 chain from another cell. Cadherins may thus contribute to the sorting of heterogeneous cell types. Acts as a regulator of neural stem cells quiescence by mediating anchorage of neural stem cells to ependymocytes in the adult subependymal zone: upon cleavage by MMP24, CDH2-mediated anchorage is affected, leading to modulate neural stem cell quiescence. Plays a role in cell-to-cell junction formation between pancreatic beta cells and neural crest stem (NCS) cells, promoting the formation of processes by NCS cells. Required for proper neurite branching. Required for pre- and postsynaptic organization. CDH2 may be involved in neuronal recognition mechanism. In hippocampal neurons, may regulate dendritic spine density. This is Cadherin-2 (Cdh2) from Rattus norvegicus (Rat).